Reading from the N-terminus, the 208-residue chain is dITP/XTP pyrophosphatase (208 aa).

Position 16-21 (16-21) interacts with substrate; that stretch reads SNNKGK. Aspartate 79 serves as the catalytic Proton acceptor. Aspartate 79 contributes to the Mg(2+) binding site. Residues serine 80, 166 to 169, lysine 189, and 194 to 195 each bind substrate; these read FGYD and HR.

It belongs to the HAM1 NTPase family. In terms of assembly, homodimer. Mg(2+) serves as cofactor.

The enzyme catalyses XTP + H2O = XMP + diphosphate + H(+). It carries out the reaction dITP + H2O = dIMP + diphosphate + H(+). The catalysed reaction is ITP + H2O = IMP + diphosphate + H(+). In terms of biological role, pyrophosphatase that catalyzes the hydrolysis of nucleoside triphosphates to their monophosphate derivatives, with a high preference for the non-canonical purine nucleotides XTP (xanthosine triphosphate), dITP (deoxyinosine triphosphate) and ITP. Seems to function as a house-cleaning enzyme that removes non-canonical purine nucleotides from the nucleotide pool, thus preventing their incorporation into DNA/RNA and avoiding chromosomal lesions. This Acinetobacter baumannii (strain ACICU) protein is dITP/XTP pyrophosphatase.